Consider the following 345-residue polypeptide: tRNA pseudouridine synthase B (345 aa).

Residue aspartate 39 is the Nucleophile of the active site.

This sequence belongs to the pseudouridine synthase TruB family. Type 1 subfamily.

The enzyme catalyses uridine(55) in tRNA = pseudouridine(55) in tRNA. Functionally, responsible for synthesis of pseudouridine from uracil-55 in the psi GC loop of transfer RNAs. This chain is tRNA pseudouridine synthase B, found in Rickettsia rickettsii (strain Iowa).